The following is a 617-amino-acid chain: KIF-binding protein (617 aa).

A disordered region spans residues 48-83 (ALLGPAPEDEDEPAADDGPGDQALGAGEPREAEGPG). The segment covering 54–66 (PEDEDEPAADDGP) has biased composition (acidic residues). Serine 174 is modified (phosphoserine).

This sequence belongs to the KIF-binding protein family. In terms of assembly, interacts with KIF1B; positively regulates KIF1B microtubule motor activity. Interacts with STMN2. In terms of tissue distribution, in the embryo it is expressed in cortical neurons; expression increases during neuronal development.

The protein resides in the cytoplasm. Its subcellular location is the cytoskeleton. In terms of biological role, activator of KIF1B plus-end-directed microtubule motor activity. Required for organization of axonal microtubules, and axonal outgrowth and maintenance during peripheral and central nervous system development. The polypeptide is KIF-binding protein (Mus musculus (Mouse)).